An 82-amino-acid chain; its full sequence is Sec-independent protein translocase protein TatA (82 aa).

A helical membrane pass occupies residues M1–G21. The segment at G43–G82 is disordered.

This sequence belongs to the TatA/E family. The Tat system comprises two distinct complexes: a TatABC complex, containing multiple copies of TatA, TatB and TatC subunits, and a separate TatA complex, containing only TatA subunits. Substrates initially bind to the TatABC complex, which probably triggers association of the separate TatA complex to form the active translocon.

It localises to the cell inner membrane. In terms of biological role, part of the twin-arginine translocation (Tat) system that transports large folded proteins containing a characteristic twin-arginine motif in their signal peptide across membranes. TatA could form the protein-conducting channel of the Tat system. The chain is Sec-independent protein translocase protein TatA from Methylocella silvestris (strain DSM 15510 / CIP 108128 / LMG 27833 / NCIMB 13906 / BL2).